A 790-amino-acid polypeptide reads, in one-letter code: MSSNTTTPTPTSTPTPTSSPSIGPVPIPYESASFGNLLFFAISLVLCGVVVLIGMKQYISLKRTPIYATFFSFLGWFMCFSIAYLVPLDIIVTDHLQCVIENNETLTGECEIPVTYLPYGMITQQWRFLYFGSLILCWVIFPVLQSFSTAGDFRFWERVKRATKENVILYTFMFIAGLIGIIVILSVKEMDPSSFLSFVMLLANVYGVILITITMGYGLIDVPRNLLRKGSHYAILRNYRVEAVVLKTELEDVKRQLIDHLKLIKTISDRAGQYDPFRIYLDVIISKCPTEYDVLIQEYHAEPLPAGMEAEILSYKYLVGIHSTLLDLVDRNHSAEVLYERLLGKAFAIEDIIETRERNKQTAGNNQIAGEERSIQWSFKSTKSNGKFEYLWHMYIHPWYFIIAGLVCVCLSGIILWSEIVLALVSNPDYSPFYRAIVRMEPGIGLQIFCFIPMIYMCVCSYSTLFKLRISNYYRLVPQQSNTFSIMFSANYLCRLAAPLAYNFIQICHVNQDNSIVSPFSKIMGDMNAFGDNALGKRFTLFFPIFMIVVCVISFFNLHKRLAGSCCIRSLRIVTDTSEGAVDHGLKILKQEREERSLTGGVAPVKTRMSIVKEMFTKKKGAGILVTDNSQLDGASGAHREPSIDSSNRYKPTPTKTSINIPKLSRTYTSAAGNVYSSTQDGDENSNSGIKPINSFFSSILGEKGNASNNNNNNNNNNNNNNSNNKNSNNNNNSILTSNYESYSTPRTKDKQGLLSSALDKMDFSFQDDDDHTFDDIEMGAYGTGRKNKK.

Over residues 1 to 21 (MSSNTTTPTPTSTPTPTSSPS) the composition is skewed to low complexity. The interval 1-22 (MSSNTTTPTPTSTPTPTSSPSI) is disordered. 5 helical membrane-spanning segments follow: residues 34–54 (FGNLLFFAISLVLCGVVVLIG), 66–86 (IYATFFSFLGWFMCFSIAYLV), 128–148 (FLYFGSLILCWVIFPVLQSFS), 167–187 (VILYTFMFIAGLIGIIVILSV), and 195–215 (FLSFVMLLANVYGVILITITM). Residues 236–266 (LRNYRVEAVVLKTELEDVKRQLIDHLKLIKT) are a coiled coil. The next 3 membrane-spanning stretches (helical) occupy residues 401–421 (FIIAGLVCVCLSGIILWSEIV), 442–462 (PGIGLQIFCFIPMIYMCVCSY), and 539–559 (FTLFFPIFMIVVCVISFFNLH). 3 disordered regions span residues 630 to 665 (SQLDGASGAHREPSIDSSNRYKPTPTKTSINIPKLS), 701 to 751 (LGEK…TKDK), and 765 to 790 (SFQDDDDHTFDDIEMGAYGTGRKNKK). Residues 644-665 (IDSSNRYKPTPTKTSINIPKLS) are compositionally biased toward polar residues. Residues 706 to 734 (NASNNNNNNNNNNNNNNSNNKNSNNNNNS) show a composition bias toward low complexity. The segment covering 735-746 (ILTSNYESYSTP) has biased composition (polar residues). A compositionally biased stretch (acidic residues) spans 766 to 778 (FQDDDDHTFDDIE).

Belongs to the LIMR family.

Its subcellular location is the membrane. In Dictyostelium discoideum (Social amoeba), this protein is LMBR1 domain-containing protein 2 homolog B.